Consider the following 157-residue polypeptide: Protein Smg (157 aa).

The protein belongs to the Smg family.

The polypeptide is Protein Smg (Yersinia pseudotuberculosis serotype O:1b (strain IP 31758)).